The primary structure comprises 297 residues: MATNLRGVMAALLTPFDQQQALDKASLRRLVQFNIQQGIDGLYVGGSTGEAFVQSLSEREQVLEIVAEEAKGKIKLIAHVGCVSTAESQQLASSAKRYGFDAVSAVTPFYYPFSFEEHCDHYRAIIDSADGLPMVVYNIPALSGVKLTLDQINTLVTLPGVGALKQTSGDLYQMEQIRREHPDLVLYNGYDEIFASGLLAGADGGIGSTYNIMGWRYQGIVKALKEGDIQTAQKLQTECNKVIDLLIKTGVFRGLKTVLHYMDVVSVPLCRKPFGPVDEKYLPELKVLAQQLMQERG.

The aceneuramate site is built by S47 and T48. Y137 acts as the Proton donor in catalysis. Residue K165 is the Schiff-base intermediate with substrate of the active site. T167, G189, D191, E192, and S208 together coordinate aceneuramate.

It belongs to the DapA family. NanA subfamily. Homotetramer.

The protein localises to the cytoplasm. The enzyme catalyses aceneuramate = aldehydo-N-acetyl-D-mannosamine + pyruvate. It participates in amino-sugar metabolism; N-acetylneuraminate degradation; D-fructose 6-phosphate from N-acetylneuraminate: step 1/5. In terms of biological role, catalyzes the reversible aldol cleavage of N-acetylneuraminic acid (sialic acid; Neu5Ac) to form pyruvate and N-acetylmannosamine (ManNAc) via a Schiff base intermediate. In Escherichia fergusonii (strain ATCC 35469 / DSM 13698 / CCUG 18766 / IAM 14443 / JCM 21226 / LMG 7866 / NBRC 102419 / NCTC 12128 / CDC 0568-73), this protein is N-acetylneuraminate lyase.